Consider the following 124-residue polypeptide: NADH-quinone oxidoreductase subunit A (124 aa).

3 consecutive transmembrane segments (helical) span residues 11 to 31, 68 to 88, and 93 to 113; these read YLPIAIFFGIATLVSSLIMIL, LVAILFIIFDLEITFLVPWAI, and IGKIGFFSMMFFLFVLTIGFV.

This sequence belongs to the complex I subunit 3 family. NDH-1 is composed of 14 different subunits. Subunits NuoA, H, J, K, L, M, N constitute the membrane sector of the complex.

It is found in the cell inner membrane. The enzyme catalyses a quinone + NADH + 5 H(+)(in) = a quinol + NAD(+) + 4 H(+)(out). Its function is as follows. NDH-1 shuttles electrons from NADH, via FMN and iron-sulfur (Fe-S) centers, to quinones in the respiratory chain. The immediate electron acceptor for the enzyme in this species is believed to be ubiquinone. Couples the redox reaction to proton translocation (for every two electrons transferred, four hydrogen ions are translocated across the cytoplasmic membrane), and thus conserves the redox energy in a proton gradient. This is NADH-quinone oxidoreductase subunit A from Rickettsia bellii (strain RML369-C).